We begin with the raw amino-acid sequence, 252 residues long: Probable transcriptional regulatory protein Moth_1704 (252 aa).

Belongs to the TACO1 family.

The protein resides in the cytoplasm. This Moorella thermoacetica (strain ATCC 39073 / JCM 9320) protein is Probable transcriptional regulatory protein Moth_1704.